A 342-amino-acid chain; its full sequence is tRNA dimethylallyltransferase (342 aa).

A compositionally biased stretch (polar residues) spans 1 to 13; the sequence is MNDTTAKTLNCSP. The disordered stretch occupies residues 1–21; sequence MNDTTAKTLNCSPASRDGFPE. 40 to 47 contacts ATP; it reads GPTGVGKT. Substrate is bound at residue 42–47; the sequence is TGVGKT. Interaction with substrate tRNA regions lie at residues 65-68 and 189-193; these read DSMQ and QRILR.

This sequence belongs to the IPP transferase family. In terms of assembly, monomer. Mg(2+) is required as a cofactor.

It catalyses the reaction adenosine(37) in tRNA + dimethylallyl diphosphate = N(6)-dimethylallyladenosine(37) in tRNA + diphosphate. Catalyzes the transfer of a dimethylallyl group onto the adenine at position 37 in tRNAs that read codons beginning with uridine, leading to the formation of N6-(dimethylallyl)adenosine (i(6)A). The protein is tRNA dimethylallyltransferase of Syntrophobacter fumaroxidans (strain DSM 10017 / MPOB).